A 471-amino-acid polypeptide reads, in one-letter code: Pachytene checkpoint protein 2 homolog (471 aa).

Residue 213 to 220 (GPPGTGKT) coordinates ATP.

This sequence belongs to the AAA ATPase family. PCH2 subfamily.

Functionally, plays a key role in chromosome recombination during meiosis. This is Pachytene checkpoint protein 2 homolog from Oryza sativa subsp. indica (Rice).